Reading from the N-terminus, the 89-residue chain is UPF0223 protein BcerKBAB4_3787 (89 aa).

This sequence belongs to the UPF0223 family.

The polypeptide is UPF0223 protein BcerKBAB4_3787 (Bacillus mycoides (strain KBAB4) (Bacillus weihenstephanensis)).